Here is a 415-residue protein sequence, read N- to C-terminus: Serine hydroxymethyltransferase (415 aa).

(6S)-5,6,7,8-tetrahydrofolate-binding positions include Leu121 and 125 to 127 (GHL). Position 229 is an N6-(pyridoxal phosphate)lysine (Lys229). Residue 352-354 (SPF) coordinates (6S)-5,6,7,8-tetrahydrofolate.

Belongs to the SHMT family. In terms of assembly, homodimer. The cofactor is pyridoxal 5'-phosphate.

It localises to the cytoplasm. The enzyme catalyses (6R)-5,10-methylene-5,6,7,8-tetrahydrofolate + glycine + H2O = (6S)-5,6,7,8-tetrahydrofolate + L-serine. It participates in one-carbon metabolism; tetrahydrofolate interconversion. The protein operates within amino-acid biosynthesis; glycine biosynthesis; glycine from L-serine: step 1/1. Its function is as follows. Catalyzes the reversible interconversion of serine and glycine with tetrahydrofolate (THF) serving as the one-carbon carrier. This reaction serves as the major source of one-carbon groups required for the biosynthesis of purines, thymidylate, methionine, and other important biomolecules. Also exhibits THF-independent aldolase activity toward beta-hydroxyamino acids, producing glycine and aldehydes, via a retro-aldol mechanism. The sequence is that of Serine hydroxymethyltransferase from Methylobacillus flagellatus (strain ATCC 51484 / DSM 6875 / VKM B-1610 / KT).